The following is a 436-amino-acid chain: Trigger factor (436 aa).

The PPIase FKBP-type domain maps to 163 to 248 (GDTVNIDFDG…VNEIKYKDVP (86 aa)).

This sequence belongs to the FKBP-type PPIase family. Tig subfamily.

It localises to the cytoplasm. The catalysed reaction is [protein]-peptidylproline (omega=180) = [protein]-peptidylproline (omega=0). Its function is as follows. Involved in protein export. Acts as a chaperone by maintaining the newly synthesized protein in an open conformation. Functions as a peptidyl-prolyl cis-trans isomerase. The polypeptide is Trigger factor (Staphylococcus saprophyticus subsp. saprophyticus (strain ATCC 15305 / DSM 20229 / NCIMB 8711 / NCTC 7292 / S-41)).